Here is a 141-residue protein sequence, read N- to C-terminus: ATP synthase epsilon chain (141 aa).

It belongs to the ATPase epsilon chain family. In terms of assembly, F-type ATPases have 2 components, CF(1) - the catalytic core - and CF(0) - the membrane proton channel. CF(1) has five subunits: alpha(3), beta(3), gamma(1), delta(1), epsilon(1). CF(0) has three main subunits: a, b and c.

The protein localises to the cell inner membrane. Functionally, produces ATP from ADP in the presence of a proton gradient across the membrane. This chain is ATP synthase epsilon chain, found in Pseudomonas fluorescens (strain Pf0-1).